A 418-amino-acid chain; its full sequence is UDP-N-acetylglucosamine 1-carboxyvinyltransferase (418 aa).

22–23 (KN) provides a ligand contact to phosphoenolpyruvate. Arg92 contributes to the UDP-N-acetyl-alpha-D-glucosamine binding site. Cys116 (proton donor) is an active-site residue. Cys116 is modified (2-(S-cysteinyl)pyruvic acid O-phosphothioketal). Residues Asp306 and Ile328 each coordinate UDP-N-acetyl-alpha-D-glucosamine.

Belongs to the EPSP synthase family. MurA subfamily.

It localises to the cytoplasm. It carries out the reaction phosphoenolpyruvate + UDP-N-acetyl-alpha-D-glucosamine = UDP-N-acetyl-3-O-(1-carboxyvinyl)-alpha-D-glucosamine + phosphate. The protein operates within cell wall biogenesis; peptidoglycan biosynthesis. Functionally, cell wall formation. Adds enolpyruvyl to UDP-N-acetylglucosamine. This is UDP-N-acetylglucosamine 1-carboxyvinyltransferase from Shewanella amazonensis (strain ATCC BAA-1098 / SB2B).